The chain runs to 1254 residues: Ubiquitin carboxyl-terminal hydrolase 12 (1254 aa).

S84 is modified (phosphoserine). The DUSP domain maps to 97 to 199 (NVLEQQRDVV…GSYPVVTNLV (103 aa)). The region spanning 364 to 1110 (TGLVNLGNTC…SAYLLFYIRR (747 aa)) is the USP domain. C373 functions as the Nucleophile in the catalytic mechanism. The disordered stretch occupies residues 827–893 (DEGDTEGSEA…EPELTDKPEA (67 aa)). Positions 854–864 (TVTNNENVNNT) are enriched in low complexity. Positions 867–883 (RDEDMELTDDVEEDAST) are enriched in acidic residues. Catalysis depends on H1068, which acts as the Proton acceptor. Phosphoserine is present on S1160. The segment at 1188–1207 (QDCNDEDDNDDGERTNSGRR) is disordered. A compositionally biased stretch (acidic residues) spans 1189–1198 (DCNDEDDNDD).

This sequence belongs to the peptidase C19 family. In terms of assembly, interacts with FZO1.

It carries out the reaction Thiol-dependent hydrolysis of ester, thioester, amide, peptide and isopeptide bonds formed by the C-terminal Gly of ubiquitin (a 76-residue protein attached to proteins as an intracellular targeting signal).. Functionally, ubiquitin carboxyl-terminal hydrolase that recognizes ubiquitin chains that stabilize FZO1 and promote mitochondrial fusion. UBP12 deubiquitylates FZO1 only after oligomerization. This chain is Ubiquitin carboxyl-terminal hydrolase 12 (UBP12), found in Saccharomyces cerevisiae (strain ATCC 204508 / S288c) (Baker's yeast).